A 209-amino-acid polypeptide reads, in one-letter code: Ribosomal RNA large subunit methyltransferase E (209 aa).

S-adenosyl-L-methionine is bound by residues G60, W62, D80, D96, and D121. The active-site Proton acceptor is K161.

This sequence belongs to the class I-like SAM-binding methyltransferase superfamily. RNA methyltransferase RlmE family.

Its subcellular location is the cytoplasm. The catalysed reaction is uridine(2552) in 23S rRNA + S-adenosyl-L-methionine = 2'-O-methyluridine(2552) in 23S rRNA + S-adenosyl-L-homocysteine + H(+). In terms of biological role, specifically methylates the uridine in position 2552 of 23S rRNA at the 2'-O position of the ribose in the fully assembled 50S ribosomal subunit. The chain is Ribosomal RNA large subunit methyltransferase E from Pseudomonas fluorescens (strain Pf0-1).